The sequence spans 29 residues: Glucagon (29 aa).

The protein belongs to the glucagon family.

It localises to the secreted. In terms of biological role, promotes hydrolysis of glycogen and lipids, and raises the blood sugar level. This Thunnus obesus (Bigeye tuna) protein is Glucagon (gcg).